Consider the following 140-residue polypeptide: 3-hydroxyacyl-[acyl-carrier-protein] dehydratase FabZ (140 aa).

His-48 is a catalytic residue.

This sequence belongs to the thioester dehydratase family. FabZ subfamily.

It localises to the cytoplasm. The catalysed reaction is a (3R)-hydroxyacyl-[ACP] = a (2E)-enoyl-[ACP] + H2O. Involved in unsaturated fatty acids biosynthesis. Catalyzes the dehydration of short chain beta-hydroxyacyl-ACPs and long chain saturated and unsaturated beta-hydroxyacyl-ACPs. This chain is 3-hydroxyacyl-[acyl-carrier-protein] dehydratase FabZ, found in Caldicellulosiruptor saccharolyticus (strain ATCC 43494 / DSM 8903 / Tp8T 6331).